The chain runs to 223 residues: Putative PAN domain-containing protein R486 (223 aa).

Positions 1-23 (MSQTAIIIWIVVIIILLVLGGLG) are cleaved as a signal peptide. Residues 39-73 (PTPINPPSSITPIQPINPPSSITPIQPSGPPSGGN) form a disordered region. Residues 45-64 (PSSITPIQPINPPSSITPIQ) show a composition bias toward low complexity. PAN domains are found at residues 80-155 (CPAY…EDGC) and 159-223 (ARYN…KMPH). 2 cysteine pairs are disulfide-bonded: cysteine 80-cysteine 155 and cysteine 109-cysteine 131. 3 N-linked (GlcNAc...) asparagine; by host glycosylation sites follow: asparagine 162, asparagine 189, and asparagine 213. Cysteine 182 and cysteine 204 are joined by a disulfide.

It localises to the secreted. The protein resides in the virion. The polypeptide is Putative PAN domain-containing protein R486 (Acanthamoeba polyphaga mimivirus (APMV)).